A 128-amino-acid chain; its full sequence is Ig kappa chain V-V region T1 (128 aa).

The first 20 residues, 1–20 (MRTPAQFLGILLLWFPGIKC), serve as a signal peptide directing secretion. A framework-1 region spans residues 21–43 (DIKMTQSPSSMYASLGERVTISC). A disulfide bridge connects residues cysteine 43 and cysteine 108. The interval 44 to 54 (KASQDINSYLT) is complementarity-determining-1. The interval 55–69 (WFQQKPGKSPKTLLY) is framework-2. The tract at residues 70-76 (RANRLVD) is complementarity-determining-2. The interval 77-108 (GVPSRFSGSGSGQDFSLTISSLEYEDMGIYYC) is framework-3. The interval 109–117 (LQYDEFPLT) is complementarity-determining-3. The interval 118–127 (FGAGTKLELK) is framework-4.

The sequence is that of Ig kappa chain V-V region T1 from Mus musculus (Mouse).